Here is a 156-residue protein sequence, read N- to C-terminus: Acyl carrier protein, mitochondrial (156 aa).

The transit peptide at 1–68 directs the protein to the mitochondrion; it reads MASRVLCACV…GTVTHLCRQY (68 aa). One can recognise a Carrier domain in the interval 77-152; that stretch reads DGIKDRVLYV…EIVDYIADKK (76 aa). Lysine 88 carries the N6-acetyllysine modification. Residue serine 112 is modified to O-(pantetheine 4'-phosphoryl)serine.

This sequence belongs to the acyl carrier protein (ACP) family. Mammalian complex I is composed of 45 different subunits. Interacts with ETFRF1. Identified in a complex composed of MALSU1, MIEF1 upstream open reading frame protein and NDUFAB1; within the trimeric complex, MIEF1 upstream open reading frame protein functions as a bridging scaffold that interacts with MALSU1 on one side, and with NDUFAB1 on the other side. The complex interacts with the mitochondrial large ribosomal subunit. Interacts with alpha-1-microglobulin chain; this interaction is required for the maintenance of mitochondrial redox homeostasis. Component of the mitochondrial core iron-sulfur cluster (ISC) complex composed of NFS1, LYRM4, NDUFAB1, ISCU, FXN, and FDX2; this complex is a heterohexamer containing two copies of each monomer. Component of the cyteine desulfurase complex composed of NFS1, LYRM4 and NDUFAB1; this complex contributes to the stability and cysteine desulfurase activity of NFS1. Post-translationally, phosphopantetheinylation at Ser-112 is essential for interactions with LYR motif-containing proteins.

The protein resides in the mitochondrion. In terms of biological role, carrier of the growing fatty acid chain in fatty acid biosynthesis. Accessory and non-catalytic subunit of the mitochondrial membrane respiratory chain NADH dehydrogenase (Complex I), which functions in the transfer of electrons from NADH to the respiratory chain. Accessory protein, of the core iron-sulfur cluster (ISC) assembly complex, that regulates, in association with LYRM4, the stability and the cysteine desulfurase activity of NFS1 and participates in the [2Fe-2S] clusters assembly on the scaffolding protein ISCU. The core iron-sulfur cluster (ISC) assembly complex is involved in the de novo synthesis of a [2Fe-2S] cluster, the first step of the mitochondrial iron-sulfur protein biogenesis. This process is initiated by the cysteine desulfurase complex (NFS1:LYRM4:NDUFAB1) that produces persulfide which is delivered on the scaffold protein ISCU in a FXN-dependent manner. Then this complex is stabilized by FDX2 which provides reducing equivalents to accomplish the [2Fe-2S] cluster assembly. Finally, the [2Fe-2S] cluster is transferred from ISCU to chaperone proteins, including HSCB, HSPA9 and GLRX5. The protein is Acyl carrier protein, mitochondrial of Mus musculus (Mouse).